A 338-amino-acid polypeptide reads, in one-letter code: 3-isopropylmalate dehydrogenase (338 aa).

Substrate-binding residues include Arg88, Arg98, Arg122, and Asp212. Mg(2+) is bound by residues Asp212, Asp236, and Asp240. Residue 272–284 (GSAPDIAGQGIAD) participates in NAD(+) binding.

The protein belongs to the isocitrate and isopropylmalate dehydrogenases family. LeuB type 2 subfamily. As to quaternary structure, homodimer. The cofactor is Mg(2+). It depends on Mn(2+) as a cofactor.

Its subcellular location is the cytoplasm. The catalysed reaction is (2R,3S)-3-isopropylmalate + NAD(+) = 4-methyl-2-oxopentanoate + CO2 + NADH. It participates in amino-acid biosynthesis; L-leucine biosynthesis; L-leucine from 3-methyl-2-oxobutanoate: step 3/4. Its function is as follows. Catalyzes the oxidation of 3-carboxy-2-hydroxy-4-methylpentanoate (3-isopropylmalate) to 3-carboxy-4-methyl-2-oxopentanoate. The product decarboxylates to 4-methyl-2 oxopentanoate. The sequence is that of 3-isopropylmalate dehydrogenase from Corynebacterium jeikeium (strain K411).